A 424-amino-acid polypeptide reads, in one-letter code: Endo-beta-1,4-galactanase (424 aa).

An N-terminal signal peptide occupies residues 1 to 26 (MKNVLAVFVVLIFVLGAFGTSGPAEA). Position 142–145 (142–145 (DPAK)) interacts with substrate. Glu190 acts as the Proton donor in catalysis. Residues 229–230 (TN) and His263 contribute to the substrate site. Catalysis depends on Glu288, which acts as the Nucleophile. Thr292 contributes to the substrate binding site. Residues Asp297, Asp299, His301, and Asn303 each contribute to the Ca(2+) site. Residues Lys307 and Asp384 each coordinate substrate. 2 residues coordinate Ca(2+): Ser392 and Asp395.

The protein belongs to the glycosyl hydrolase 53 family. The cofactor is Ca(2+).

It carries out the reaction The enzyme specifically hydrolyzes (1-&gt;4)-beta-D-galactosidic linkages in type I arabinogalactans.. Involved in galactan degradation. Degrades arabinose-free galactan to galactooligosaccharides, producing galactotetraose as the main product along with galactotriose, galactobiose, and galactose. May hydrolyze the beta-1,4-galactan linkages of the galactan portion of arabinogalactan type I, a pectic plant polysaccharide from which most of the arabinose has been removed. The polypeptide is Endo-beta-1,4-galactanase (ganB) (Bacillus licheniformis (strain ATCC 14580 / DSM 13 / JCM 2505 / CCUG 7422 / NBRC 12200 / NCIMB 9375 / NCTC 10341 / NRRL NRS-1264 / Gibson 46)).